Here is a 127-residue protein sequence, read N- to C-terminus: uncharacterized protein (127 aa).

This is an uncharacterized protein from Pasteurella multocida (strain Pm70).